The following is a 579-amino-acid chain: Zinc finger protein 382 (579 aa).

Over residues methionine 1–alanine 12 the composition is skewed to basic residues. The interval methionine 1 to methionine 37 is disordered. Residues alanine 12–isoleucine 135 are mediates interaction with TRIM28. The segment covering glycine 27–alanine 36 has biased composition (polar residues). Represses transcription regions lie at residues glycine 40 to valine 81 and isoleucine 105 to arginine 240. Positions valine 42–glutamate 113 constitute a KRAB domain. Residues phenylalanine 241 to histidine 263 form a C2H2-type 1; degenerate zinc finger. 9 consecutive C2H2-type zinc fingers follow at residues phenylalanine 325–histidine 347, tyrosine 353–histidine 375, tyrosine 381–histidine 403, tyrosine 409–histidine 431, tyrosine 437–histidine 459, tyrosine 465–histidine 487, tyrosine 493–histidine 515, asparagine 521–histidine 543, and tyrosine 549–histidine 571. Positions phenylalanine 325–glutamine 579 are required for transcriptional repression activity; probably mediates sequence-specific DNA-binding.

It belongs to the krueppel C2H2-type zinc-finger protein family. In terms of assembly, interacts with TRIM28; enhances the transcriptional repressor activity.

It localises to the nucleus. In terms of biological role, functions as a sequence-specific transcriptional repressor. In Mus musculus (Mouse), this protein is Zinc finger protein 382 (Znf382).